The following is a 49-amino-acid chain: uncharacterized protein (49 aa).

The first 22 residues, 1-22 (MKLNAFHLVVVVLIVSIFSVSS), serve as a signal peptide directing secretion.

Its subcellular location is the secreted. This is an uncharacterized protein from Dictyostelium discoideum (Social amoeba).